A 249-amino-acid chain; its full sequence is Putative TrmH family tRNA/rRNA methyltransferase (249 aa).

S-adenosyl-L-methionine contacts are provided by Gly-196, Ile-216, and Leu-225.

Belongs to the class IV-like SAM-binding methyltransferase superfamily. RNA methyltransferase TrmH family.

This is Putative TrmH family tRNA/rRNA methyltransferase from Staphylococcus haemolyticus (strain JCSC1435).